A 720-amino-acid chain; its full sequence is DNA ligase (720 aa).

NAD(+)-binding positions include 60–64 (DYDYD), 109–110 (SL), and glutamate 140. Lysine 142 serves as the catalytic N6-AMP-lysine intermediate. The NAD(+) site is built by arginine 163 and glutamate 201. A disordered region spans residues 220–239 (GLPPFANPRNAAAGSIRQKD). Residues lysine 320 and lysine 344 each coordinate NAD(+). Zn(2+)-binding residues include cysteine 438, cysteine 441, cysteine 456, and cysteine 461. Positions 619–709 (KVADVLKGKT…VDLEKIKKED (91 aa)) constitute a BRCT domain.

This sequence belongs to the NAD-dependent DNA ligase family. LigA subfamily. The cofactor is Mn(2+). Mg(2+) serves as cofactor.

The catalysed reaction is NAD(+) + (deoxyribonucleotide)n-3'-hydroxyl + 5'-phospho-(deoxyribonucleotide)m = (deoxyribonucleotide)n+m + AMP + beta-nicotinamide D-nucleotide.. Its function is as follows. DNA ligase that catalyzes the formation of phosphodiester linkages between 5'-phosphoryl and 3'-hydroxyl groups in double-stranded DNA using NAD as a coenzyme and as the energy source for the reaction. It is essential for DNA replication and repair of damaged DNA. The protein is DNA ligase of Aquifex aeolicus (strain VF5).